The chain runs to 117 residues: MHNTQHGLQQLNQCRQTAQQLIQQTQQSSQQYRQMLHQEQQNIQMLQQILNHEQQAAHTIQQALHGHDMAIQKCQQVVNMCNQMQQELTGQSSVMNTNVSTLPFGQNTTFQQQSYQQ.

This is an uncharacterized protein from Bacillus subtilis (strain 168).